We begin with the raw amino-acid sequence, 650 residues long: Chaperone protein DnaK (650 aa).

At threonine 200 the chain carries Phosphothreonine; by autocatalysis.

This sequence belongs to the heat shock protein 70 family.

Acts as a chaperone. This chain is Chaperone protein DnaK, found in Paraburkholderia phytofirmans (strain DSM 17436 / LMG 22146 / PsJN) (Burkholderia phytofirmans).